The primary structure comprises 397 residues: 1-deoxy-D-xylulose 5-phosphate reductoisomerase (397 aa).

Residues threonine 17, glycine 18, serine 19, isoleucine 20, alanine 45, asparagine 47, and asparagine 130 each contribute to the NADPH site. Lysine 131 contributes to the 1-deoxy-D-xylulose 5-phosphate binding site. Residue glutamate 132 participates in NADPH binding. Aspartate 156 contacts Mn(2+). Serine 157, glutamate 158, serine 182, and histidine 205 together coordinate 1-deoxy-D-xylulose 5-phosphate. Mn(2+) is bound at residue glutamate 158. Glycine 211 lines the NADPH pocket. 1-deoxy-D-xylulose 5-phosphate contacts are provided by serine 218, asparagine 223, lysine 224, and glutamate 227. Glutamate 227 is a binding site for Mn(2+).

Belongs to the DXR family. It depends on Mg(2+) as a cofactor. The cofactor is Mn(2+).

The enzyme catalyses 2-C-methyl-D-erythritol 4-phosphate + NADP(+) = 1-deoxy-D-xylulose 5-phosphate + NADPH + H(+). It participates in isoprenoid biosynthesis; isopentenyl diphosphate biosynthesis via DXP pathway; isopentenyl diphosphate from 1-deoxy-D-xylulose 5-phosphate: step 1/6. Its function is as follows. Catalyzes the NADPH-dependent rearrangement and reduction of 1-deoxy-D-xylulose-5-phosphate (DXP) to 2-C-methyl-D-erythritol 4-phosphate (MEP). The polypeptide is 1-deoxy-D-xylulose 5-phosphate reductoisomerase (Agrobacterium fabrum (strain C58 / ATCC 33970) (Agrobacterium tumefaciens (strain C58))).